The following is a 547-amino-acid chain: Glucose-6-phosphate isomerase (547 aa).

E353 functions as the Proton donor in the catalytic mechanism. Active-site residues include H384 and K512.

This sequence belongs to the GPI family.

Its subcellular location is the cytoplasm. The catalysed reaction is alpha-D-glucose 6-phosphate = beta-D-fructose 6-phosphate. It functions in the pathway carbohydrate biosynthesis; gluconeogenesis. It participates in carbohydrate degradation; glycolysis; D-glyceraldehyde 3-phosphate and glycerone phosphate from D-glucose: step 2/4. Its function is as follows. Catalyzes the reversible isomerization of glucose-6-phosphate to fructose-6-phosphate. This Glaesserella parasuis serovar 5 (strain SH0165) (Haemophilus parasuis) protein is Glucose-6-phosphate isomerase.